The chain runs to 412 residues: Lysosomal phospholipase A and acyltransferase (412 aa).

Positions 1–33 (MGLHLRPYRVGLLPDGLLFLLLLLMLLADPALP) are cleaved as a signal peptide. Aspartate 46 provides a ligand contact to substrate. The cysteines at positions 65 and 89 are disulfide-linked. An N-linked (GlcNAc...) asparagine glycan is attached at asparagine 99. Catalysis depends on serine 198, which acts as the Acyl-ester intermediate. Serine 198 contributes to the Zn(2+) binding site. Position 199 (methionine 199) interacts with substrate. Asparagine 273 and asparagine 289 each carry an N-linked (GlcNAc...) asparagine glycan. Positions 340 and 355 each coordinate Zn(2+). Catalysis depends on charge relay system residues aspartate 360 and histidine 392. Residue histidine 392 coordinates Zn(2+). The N-linked (GlcNAc...) asparagine glycan is linked to asparagine 398.

It belongs to the AB hydrolase superfamily. Lipase family. In terms of processing, N-glycosylated. N-glycosylation is important for maturation of the enzyme and normal subcellular location. Detected in blood plasma (at protein level). Ubiquitous. Highly expressed in heart, placenta, skeletal muscle, kidney and pancreas. Detected at lower levels in spleen, thymus, prostate, testis, ovary, small intestine, colon and peripheral blood leukocytes.

It is found in the lysosome. Its subcellular location is the secreted. The protein localises to the membrane. It carries out the reaction a 1,2-diacyl-sn-glycero-3-phosphocholine + H2O = a 2-acyl-sn-glycero-3-phosphocholine + a fatty acid + H(+). The enzyme catalyses 1-hexadecanoyl-2-(9Z-octadecenoyl)-sn-glycero-3-phosphocholine + H2O = 2-(9Z-octadecenoyl)-sn-glycero-3-phosphocholine + hexadecanoate + H(+). It catalyses the reaction 1-hexadecanoyl-2-glutaroyl-sn-glycero-3-phosphocholine + H2O = 2-glutaroyl-sn-glycero-3-phosphocholine + hexadecanoate + H(+). The catalysed reaction is 1-hexadecanoyl-2-nonadioyl-sn-glycero-3-phosphocholine + H2O = 2-nonadioyl-sn-glycero-3-phosphocholine + hexadecanoate + H(+). It carries out the reaction 1-hexadecanoyl-2-(5-oxopentanoyl)-sn-glycero-3-phosphocholine + H2O = 2-(5-oxopentanoyl)-sn-glycero-3-phosphocholine + hexadecanoate + H(+). The enzyme catalyses 1-hexadecanoyl-2-(9-oxononanoyl)-sn-glycero-3-phosphocholine + H2O = 2-(9-oxononanoyl)-sn-glycero-3-phosphocholine + hexadecanoate + H(+). It catalyses the reaction 1,2-dihexadecanoyl-sn-glycero-3-phosphocholine + H2O = 2-hexadecanoyl-sn-glycero-3-phosphocholine + hexadecanoate + H(+). The catalysed reaction is a 1,2-diacyl-sn-glycero-3-phosphocholine + H2O = a 1-acyl-sn-glycero-3-phosphocholine + a fatty acid + H(+). It carries out the reaction 1,2-di-(9Z-octadecenoyl)-sn-glycero-3-phosphocholine + H2O = 1-(9Z-octadecenoyl)-sn-glycero-3-phosphocholine + (9Z)-octadecenoate + H(+). The enzyme catalyses 1-hexadecanoyl-2-(9Z-octadecenoyl)-sn-glycero-3-phosphocholine + H2O = 1-hexadecanoyl-sn-glycero-3-phosphocholine + (9Z)-octadecenoate + H(+). It catalyses the reaction 1,2-dihexadecanoyl-sn-glycero-3-phosphocholine + H2O = 1-hexadecanoyl-sn-glycero-3-phosphocholine + hexadecanoate + H(+). The catalysed reaction is a 1-acyl-sn-glycero-3-phosphocholine + H2O = sn-glycerol 3-phosphocholine + a fatty acid + H(+). It carries out the reaction 1-hexadecanoyl-sn-glycero-3-phosphocholine + H2O = sn-glycerol 3-phosphocholine + hexadecanoate + H(+). The enzyme catalyses N-(acetyl)-sphing-4-enine + a 1,2-diacyl-sn-glycero-3-phosphoethanolamine = 1-O-acyl-N-(acetyl)-sphing-4-enine + a 2-acyl-sn-glycero-3-phosphoethanolamine. It catalyses the reaction 1-hexadecanoyl-2-(9Z-octadecenoyl)-sn-glycero-3-phosphoethanolamine + N-(acetyl)-sphing-4-enine = 2-(9Z-octadecenoyl)-sn-glycero-3-phosphoethanolamine + 1-hexadecanoyl-N-(acetyl)-sphing-4-enine. The catalysed reaction is 1-hexadecanoyl-2-(9Z,12Z-octadecadienoyl)-sn-glycero-3-phosphoethanolamine + N-(acetyl)-sphing-4-enine = 2-(9Z,12Z)-octadecadienoyl-sn-glycero-3-phosphoethanolamine + 1-hexadecanoyl-N-(acetyl)-sphing-4-enine. It carries out the reaction 1-hexadecanoyl-2-(5Z,8Z,11Z,14Z-eicosatetraenoyl)-sn-glycero-3-phosphoethanolamine + N-(acetyl)-sphing-4-enine = 2-(5Z,8Z,11Z,14Z)-eicosatetraenoyl-sn-glycero-3-phosphoethanolamine + 1-hexadecanoyl-N-(acetyl)-sphing-4-enine. The enzyme catalyses N-(acetyl)-sphing-4-enine + a 1,2-diacyl-sn-glycero-3-phosphoethanolamine = 1-O-acyl-N-(acetyl)-sphing-4-enine + a 1-acyl-sn-glycero-3-phosphoethanolamine. It catalyses the reaction 1-hexadecanoyl-2-(9Z-octadecenoyl)-sn-glycero-3-phosphoethanolamine + N-(acetyl)-sphing-4-enine = 1-(9Z-octadecenoyl)-N-(acetyl)-sphing-4-enine + 1-hexadecanoyl-sn-glycero-3-phosphoethanolamine. The catalysed reaction is 1-hexadecanoyl-2-(9Z,12Z-octadecadienoyl)-sn-glycero-3-phosphoethanolamine + N-(acetyl)-sphing-4-enine = 1-(9Z,12Z-octadecadienoyl)-N-acetylsphing-4-enine + 1-hexadecanoyl-sn-glycero-3-phosphoethanolamine. It carries out the reaction 1-hexadecanoyl-2-(5Z,8Z,11Z,14Z-eicosatetraenoyl)-sn-glycero-3-phosphoethanolamine + N-(acetyl)-sphing-4-enine = 1-(5Z,8Z,11Z,14Z)-eicosatetraenoyl-N-(acetyl)-sphing-4-enine + 1-hexadecanoyl-sn-glycero-3-phosphoethanolamine. The enzyme catalyses N-(acetyl)-sphing-4-enine + a 1,2-diacyl-sn-glycero-3-phosphocholine = 1-O-acyl-N-(acetyl)-sphing-4-enine + a 1-acyl-sn-glycero-3-phosphocholine. It catalyses the reaction 1-hexadecanoyl-2-(9Z-octadecenoyl)-sn-glycero-3-phosphocholine + N-(acetyl)-sphing-4-enine = 1-(9Z-octadecenoyl)-N-(acetyl)-sphing-4-enine + 1-hexadecanoyl-sn-glycero-3-phosphocholine. The catalysed reaction is 1-hexadecanoyl-2-(9Z,12Z-octadecadienoyl)-sn-glycero-3-phosphocholine + N-(acetyl)-sphing-4-enine = 1-(9Z,12Z-octadecadienoyl)-N-acetylsphing-4-enine + 1-hexadecanoyl-sn-glycero-3-phosphocholine. It carries out the reaction 1-hexadecanoyl-2-(5Z,8Z,11Z,14Z-eicosatetraenoyl)-sn-glycero-3-phosphocholine + N-(acetyl)-sphing-4-enine = 1-(5Z,8Z,11Z,14Z)-eicosatetraenoyl-N-(acetyl)-sphing-4-enine + 1-hexadecanoyl-sn-glycero-3-phosphocholine. The enzyme catalyses 1-hexadecanoyl-2-(4Z,7Z,10Z,13Z,16Z,19Z-docosahexaenoyl)-sn-glycero-3-phosphocholine + N-(acetyl)-sphing-4-enine = 1-(4Z,7Z,10Z,13Z,16Z,19Z-docosahexaenoyl)-N-(acetyl)-sphing-4-enine + 1-hexadecanoyl-sn-glycero-3-phosphocholine. It catalyses the reaction 1-octadecanoyl-2-(9Z-octadecenoyl)-sn-glycero-3-phosphocholine + N-(acetyl)-sphing-4-enine = 1-(9Z-octadecenoyl)-N-(acetyl)-sphing-4-enine + 1-octadecanoyl-sn-glycero-3-phosphocholine. The catalysed reaction is 1-octadecanoyl-2-(9Z,12Z)-octadecadienoyl-sn-glycero-3-phosphocholine + N-(acetyl)-sphing-4-enine = 1-(9Z,12Z-octadecadienoyl)-N-acetylsphing-4-enine + 1-octadecanoyl-sn-glycero-3-phosphocholine. It carries out the reaction 1-octadecanoyl-2-(5Z,8Z,11Z,14Z-eicosatetraenoyl)-sn-glycero-3-phosphocholine + N-(acetyl)-sphing-4-enine = 1-(5Z,8Z,11Z,14Z)-eicosatetraenoyl-N-(acetyl)-sphing-4-enine + 1-octadecanoyl-sn-glycero-3-phosphocholine. The enzyme catalyses 1-(9Z-octadecenoyl)-2-hexadecanoyl-sn-glycero-3-phosphocholine + N-(acetyl)-sphing-4-enine = 1-hexadecanoyl-N-(acetyl)-sphing-4-enine + 1-(9Z-octadecenoyl)-sn-glycero-3-phosphocholine. It catalyses the reaction 1-(9Z)-octadecenoyl-2-octadecanoyl-sn-glycero-3-phosphocholine + N-(acetyl)-sphing-4-enine = 1-octadecanoyl-N-(acetyl)-sphing-4-enine + 1-(9Z-octadecenoyl)-sn-glycero-3-phosphocholine. The catalysed reaction is 1,2-di-(9Z-octadecenoyl)-sn-glycero-3-phosphocholine + N-(acetyl)-sphing-4-enine = 1-(9Z-octadecenoyl)-N-(acetyl)-sphing-4-enine + 1-(9Z-octadecenoyl)-sn-glycero-3-phosphocholine. It carries out the reaction N-(acetyl)-sphing-4-enine + a 1,2-diacyl-sn-glycero-3-phosphocholine = 1-O-acyl-N-(acetyl)-sphing-4-enine + a 2-acyl-sn-glycero-3-phosphocholine. The enzyme catalyses 1-hexadecanoyl-2-(9Z-octadecenoyl)-sn-glycero-3-phosphocholine + N-(acetyl)-sphing-4-enine = 1-hexadecanoyl-N-(acetyl)-sphing-4-enine + 2-(9Z-octadecenoyl)-sn-glycero-3-phosphocholine. It catalyses the reaction 1-hexadecanoyl-2-(9Z,12Z-octadecadienoyl)-sn-glycero-3-phosphocholine + N-(acetyl)-sphing-4-enine = 2-(9Z,12Z-octadecadienoyl)-sn-glycero-3-phosphocholine + 1-hexadecanoyl-N-(acetyl)-sphing-4-enine. The catalysed reaction is 1-hexadecanoyl-2-(5Z,8Z,11Z,14Z-eicosatetraenoyl)-sn-glycero-3-phosphocholine + N-(acetyl)-sphing-4-enine = 1-hexadecanoyl-N-(acetyl)-sphing-4-enine + 2-(5Z,8Z,11Z,14Z)-eicosatetraenoyl-sn-glycero-3-phosphocholine. It carries out the reaction 1-hexadecanoyl-2-(4Z,7Z,10Z,13Z,16Z,19Z-docosahexaenoyl)-sn-glycero-3-phosphocholine + N-(acetyl)-sphing-4-enine = 2-(4Z,7Z,10Z,13Z,16Z,19Z-docosahexaenoyl)-sn-glycero-3-phosphocholine + 1-hexadecanoyl-N-(acetyl)-sphing-4-enine. The enzyme catalyses 1-hexadecanoyl-2-nonadioyl-sn-glycero-3-phosphocholine + N-(acetyl)-sphing-4-enine = 2-nonadioyl-sn-glycero-3-phosphocholine + 1-hexadecanoyl-N-(acetyl)-sphing-4-enine. It catalyses the reaction 1-octadecanoyl-2-(9Z-octadecenoyl)-sn-glycero-3-phosphocholine + N-(acetyl)-sphing-4-enine = 1-octadecanoyl-N-(acetyl)-sphing-4-enine + 2-(9Z-octadecenoyl)-sn-glycero-3-phosphocholine. The catalysed reaction is 1-octadecanoyl-2-(5Z,8Z,11Z,14Z-eicosatetraenoyl)-sn-glycero-3-phosphocholine + N-(acetyl)-sphing-4-enine = 1-octadecanoyl-N-(acetyl)-sphing-4-enine + 2-(5Z,8Z,11Z,14Z)-eicosatetraenoyl-sn-glycero-3-phosphocholine. It carries out the reaction 1-(9Z-octadecenoyl)-2-hexadecanoyl-sn-glycero-3-phosphocholine + N-(acetyl)-sphing-4-enine = 1-(9Z-octadecenoyl)-N-(acetyl)-sphing-4-enine + 2-hexadecanoyl-sn-glycero-3-phosphocholine. The enzyme catalyses 1-(9Z)-octadecenoyl-2-octadecanoyl-sn-glycero-3-phosphocholine + N-(acetyl)-sphing-4-enine = 2-octadecanoyl-sn-glycero-3-phosphocholine + 1-(9Z-octadecenoyl)-N-(acetyl)-sphing-4-enine. It catalyses the reaction a 1,2-diacyl-sn-glycero-3-phospho-L-serine + N-(acetyl)-sphing-4-enine = a 2-acyl-sn-glycero-3-phospho-L-serine + 1-O-acyl-N-(acetyl)-sphing-4-enine. The catalysed reaction is 1-octadecanoyl-2-(9Z-octadecenoyl)-sn-glycero-3-phospho-L-serine + N-(acetyl)-sphing-4-enine = 2-(9Z-octadecenoyl)-sn-glycero-3-phospho-L-serine + 1-octadecanoyl-N-(acetyl)-sphing-4-enine. It carries out the reaction a 1,2-diacyl-sn-glycero-3-phospho-L-serine + N-(acetyl)-sphing-4-enine = 1-O-acyl-N-(acetyl)-sphing-4-enine + a 1-acyl-sn-glycero-3-phospho-L-serine. The enzyme catalyses 1-octadecanoyl-2-(9Z-octadecenoyl)-sn-glycero-3-phospho-L-serine + N-(acetyl)-sphing-4-enine = 1-octadecanoyl-sn-glycero-3-phosphoserine + 1-(9Z-octadecenoyl)-N-(acetyl)-sphing-4-enine. It catalyses the reaction a 1,2-diacyl-sn-glycero-3-phospho-(1'-sn-glycerol) + N-(acetyl)-sphing-4-enine = 2-acyl-sn-glycero-3-phospho-(1'-sn-glycerol) + 1-O-acyl-N-(acetyl)-sphing-4-enine. The catalysed reaction is 1-octadecanoyl-2-(9Z-octadecenoyl)-sn-glycero-3-phospho-(1'-sn-glycerol) + N-(acetyl)-sphing-4-enine = 2-(9Z-octadecenoyl)-sn-glycero-3-phospho-(1'-sn-glycerol) + 1-octadecanoyl-N-(acetyl)-sphing-4-enine. It carries out the reaction a 1,2-diacyl-sn-glycero-3-phospho-(1'-sn-glycerol) + N-(acetyl)-sphing-4-enine = 1-O-acyl-N-(acetyl)-sphing-4-enine + 1-acyl-sn-glycero-3-phospho-(1'-sn-glycerol). The enzyme catalyses 1-octadecanoyl-2-(9Z-octadecenoyl)-sn-glycero-3-phospho-(1'-sn-glycerol) + N-(acetyl)-sphing-4-enine = 1-octadecanoyl-sn-glycero-3-phospho-(1'-sn-glycerol) + 1-(9Z-octadecenoyl)-N-(acetyl)-sphing-4-enine. It catalyses the reaction an N-acylethanolamine + a 1,2-diacyl-sn-glycero-3-phosphocholine = 2-(acylamino)ethyl fatty acid + a 2-acyl-sn-glycero-3-phosphocholine. The catalysed reaction is an N-acylethanolamine + a 1,2-diacyl-sn-glycero-3-phosphocholine = 2-(acylamino)ethyl fatty acid + a 1-acyl-sn-glycero-3-phosphocholine. It carries out the reaction N-(5Z,8Z,11Z,14Z-eicosatetraenoyl)-ethanolamine + 1,2-di-(9Z-octadecenoyl)-sn-glycero-3-phosphocholine = 2-[(5Z,8Z,11Z,14Z)-eicosatetraenoylamino]ethyl (9Z)-octadecenoate + (9Z-octadecenoyl)-sn-glycero-3-phosphocholine. The enzyme catalyses N-(9Z-octadecenoyl) ethanolamine + 1,2-di-(9Z-octadecenoyl)-sn-glycero-3-phosphocholine = 2-[(9Z)-octadecenoylamino]ethyl (9Z)-octadecenoate + (9Z-octadecenoyl)-sn-glycero-3-phosphocholine. It catalyses the reaction a 3-acyl-sn-glycerol + a 1,2-diacyl-sn-glycero-3-phosphocholine = a 1,3-diacylglycerol + a 1-acyl-sn-glycero-3-phosphocholine. The catalysed reaction is a 3-acyl-sn-glycerol + a 1,2-diacyl-sn-glycero-3-phosphocholine = a 1,3-diacylglycerol + a 2-acyl-sn-glycero-3-phosphocholine. It carries out the reaction 3-(9Z-octadecenoyl)-sn-glycerol + 1,2-di-(9Z-octadecenoyl)-sn-glycero-3-phosphocholine = 1,3-di-(9Z-octadecenoyl)-glycerol + (9Z-octadecenoyl)-sn-glycero-3-phosphocholine. The enzyme catalyses 3-hexadecanoyl-sn-glycerol + 1,2-di-(9Z-octadecenoyl)-sn-glycero-3-phosphocholine = 1-(9Z)-octadecenoyl-3-hexadecanoyl-sn-glycerol + (9Z-octadecenoyl)-sn-glycero-3-phosphocholine. It catalyses the reaction a 1-acyl-sn-glycerol + a 1,2-diacyl-sn-glycero-3-phosphocholine = a 1,3-diacylglycerol + a 2-acyl-sn-glycero-3-phosphocholine. The catalysed reaction is a 1-acyl-sn-glycerol + a 1,2-diacyl-sn-glycero-3-phosphocholine = a 1,3-diacylglycerol + a 1-acyl-sn-glycero-3-phosphocholine. It carries out the reaction 1-(9Z-octadecenoyl)-sn-glycerol + 1,2-di-(9Z-octadecenoyl)-sn-glycero-3-phosphocholine = 1,3-di-(9Z-octadecenoyl)-glycerol + (9Z-octadecenoyl)-sn-glycero-3-phosphocholine. The enzyme catalyses 1-hexadecanoyl-sn-glycerol + 1,2-di-(9Z-octadecenoyl)-sn-glycero-3-phosphocholine = 1-hexadecanoyl-3-(9Z)-octadecenoyl-sn-glycerol + (9Z-octadecenoyl)-sn-glycero-3-phosphocholine. It catalyses the reaction a 2-acylglycerol + a 1,2-diacyl-sn-glycero-3-phosphocholine = a 1,2-diacylglycerol + a 2-acyl-sn-glycero-3-phosphocholine. The catalysed reaction is a 2-acylglycerol + a 1,2-diacyl-sn-glycero-3-phosphocholine = a 1,2-diacylglycerol + a 1-acyl-sn-glycero-3-phosphocholine. It carries out the reaction 2-hexadecanoylglycerol + 1,2-di-(9Z-octadecenoyl)-sn-glycero-3-phosphocholine = 1-(9Z)-octadecenoyl-2-hexadecanoylglycerol + (9Z-octadecenoyl)-sn-glycero-3-phosphocholine. The enzyme catalyses 1-O-alkylglycerol + a 1,2-diacyl-sn-glycero-3-phosphocholine = 1-O-alkyl-3-acylglycerol + a 1-acyl-sn-glycero-3-phosphocholine. It catalyses the reaction 1-O-alkylglycerol + a 1,2-diacyl-sn-glycero-3-phosphocholine = 1-O-alkyl-3-acylglycerol + a 2-acyl-sn-glycero-3-phosphocholine. The catalysed reaction is 1-O-hexadecylglycerol + 1,2-di-(9Z-octadecenoyl)-sn-glycero-3-phosphocholine = 1-O-hexadecyl-3-(9Z)-octadecenoylglycerol + (9Z-octadecenoyl)-sn-glycero-3-phosphocholine. It carries out the reaction 1-O-alkyl-2-acyl-sn-glycerol + a 1,2-diacyl-sn-glycero-3-phosphocholine = 1-O-alkyl-2,3-diacyl-sn-glycerol + a 2-acyl-sn-glycero-3-phosphocholine. The enzyme catalyses 1-O-alkyl-2-acyl-sn-glycerol + a 1,2-diacyl-sn-glycero-3-phosphocholine = 1-O-alkyl-2,3-diacyl-sn-glycerol + a 1-acyl-sn-glycero-3-phosphocholine. It catalyses the reaction 1-O-hexadecyl-2-acetyl-sn-glycerol + 1,2-di-(9Z-octadecenoyl)-sn-glycero-3-phosphocholine = 1-O-hexadecyl-2-acetyl-3-(9Z)-octadecenoyl-sn-glycerol + (9Z-octadecenoyl)-sn-glycero-3-phosphocholine. The catalysed reaction is 1-O-hexadecyl-2-O-methyl-sn-glycerol + 1,2-di-(9Z-octadecenoyl)-sn-glycero-3-phosphocholine = 1-O-hexadecyl-2-O-methyl-3-(9Z)-octadecenoyl-sn-glycerol + (9Z-octadecenoyl)-sn-glycero-3-phosphocholine. It carries out the reaction a 1,2-diacyl-sn-glycero-3-phosphoethanolamine + H2O = a 1-acyl-sn-glycero-3-phosphoethanolamine + a fatty acid + H(+). The enzyme catalyses 1-acyl-2-(5Z,8Z,11Z,14Z)-eicosatetraenoyl-sn-glycero-3-phosphoethanolamine + H2O = a 1-acyl-sn-glycero-3-phosphoethanolamine + (5Z,8Z,11Z,14Z)-eicosatetraenoate + H(+). It catalyses the reaction a 1,2-diacyl-sn-glycero-3-phospho-(1'-sn-glycerol) + H2O = 1-acyl-sn-glycero-3-phospho-(1'-sn-glycerol) + a fatty acid + H(+). The catalysed reaction is 1-hexadecanoyl-2-(9Z-octadecenoyl)-sn-glycero-3-phospho-(1'-sn-glycerol) + H2O = 1-hexadecanoyl-sn-glycero-3-phospho-(1'-sn-glycerol) + (9Z)-octadecenoate + H(+). It carries out the reaction a 1,2-diacyl-sn-glycero-3-phospho-(1'-sn-glycerol) + H2O = 2-acyl-sn-glycero-3-phospho-(1'-sn-glycerol) + a fatty acid + H(+). The enzyme catalyses 1-hexadecanoyl-2-(9Z-octadecenoyl)-sn-glycero-3-phospho-(1'-sn-glycerol) + H2O = 2-(9Z-octadecenoyl)-sn-glycero-3-phospho-(1'-sn-glycerol) + hexadecanoate + H(+). With respect to regulation, inhibited by zinc ions at neutral pH. Zinc ions in plasma may keep the enzyme from hydrolyzing inappropriate substrates. In terms of biological role, has dual calcium-independent phospholipase and O-acyltransferase activities with a potential role in glycerophospholipid homeostasis and remodeling of acyl groups of lipophilic alcohols present in acidic cellular compartments. Catalyzes hydrolysis of the ester bond of the fatty acyl group attached at sn-1 or sn-2 position of phospholipids (phospholipase A1 or A2 activity) and transfer it to the hydroxyl group at the first carbon of lipophilic alcohols (O-acyltransferase activity). Among preferred fatty acyl donors are phosphatidylcholines, phosphatidylethanolamines, phosphatidylglycerols and phosphatidylserines. Favors sn-2 over sn-1 deacylation of unsaturated fatty acyl groups of phosphatidylcholines, phosphatidylethanolamines, and phosphatidylglycerols. Among preferred fatty acyl acceptors are natural lipophilic alcohols including short-chain ceramide N-acetyl-sphingosine (C2 ceramide), alkylacylglycerols, monoacylglycerols, and acylethanolamides such as anandamide and oleoylethanolamide. Selectively hydrolyzes the sn-1 fatty acyl group of truncated oxidized phospholipids and may play a role in detoxification of reactive oxidized phospholipids during oxidative stress. Required for normal phospholipid degradation in alveolar macrophages with potential implications in the clearance of pulmonary surfactant, which is mainly composed of dipalmitoylphosphatidylcholine (1,2-dihexadecanoyl-sn-glycero-3-phosphocholine). Involved in the first step of bis(monoacylglycero)phosphate (BMP) de novo synthesis from phosphatidylglycerol (1,2-diacyl-sn-glycero-3-phospho-(1'-sn-glycerol), PG). BMP is an important player in cargo sorting and degradation, regulation of cellular cholesterol levels and intercellular communication. At neutral pH, hydrolyzes the sn-1 fatty acyl group of the lysophosphatidylcholines. This is Lysosomal phospholipase A and acyltransferase from Homo sapiens (Human).